A 182-amino-acid chain; its full sequence is Keratin, type II cytoskeletal 68 kDa, component IA (182 aa).

The region spanning 1–66 is the IF rod domain; sequence DAEQHGEVAL…TLLEGEECRM (66 aa). The tract at residues 1–66 is coil 2B; the sequence is DAEQHGEVAL…TLLEGEECRM (66 aa). An H2 subdomain region spans residues 67–86; sequence SGECQSSVSIEMVHNTTSSS. A tail region spans residues 67–182; that stretch reads SGECQSSVSI…SQSQRSHHKL (116 aa). The tract at residues 87 to 162 is V2 subdomain; sequence SGGSGALGGG…GSCAVSGVGG (76 aa). Gly residues predominate over residues 104-124; sequence GSGGLGSGSLGSGRLGSGGRG. The tract at residues 104-182 is disordered; sequence GSGGLGSGSL…SQSQRSHHKL (79 aa). 2 stretches are compositionally biased toward low complexity: residues 144–158 and 165–176; these read VRGS…CAVS and SVRVTQSSSQSQ. An E2 subdomain region spans residues 163–182; it reads RGSVRVTQSSSQSQRSHHKL.

It belongs to the intermediate filament family. In terms of assembly, heterotetramer of two type I and two type II keratins.

This Bos taurus (Bovine) protein is Keratin, type II cytoskeletal 68 kDa, component IA.